The primary structure comprises 174 residues: Co-chaperone protein HscB homolog (174 aa).

The J domain occupies 2 to 74; the sequence is NYFELFKFSP…IRRAEHMLSL (73 aa).

The protein belongs to the HscB family. In terms of assembly, interacts with HscA and stimulates its ATPase activity.

Co-chaperone involved in the maturation of iron-sulfur cluster-containing proteins. Seems to help targeting proteins to be folded toward HscA. The chain is Co-chaperone protein HscB homolog from Shewanella sp. (strain MR-4).